We begin with the raw amino-acid sequence, 434 residues long: MEKIIVRGGKRLNGTVRVEGAKNAVLPIIAAALLASDGKNVLSEVPVLSDVYTINEVLRHLNAEVVFENNQVTIDASKELNIEAPFEYVRKMRASVQVMGPLLARNGRARIALPGGCAIGSRPIDQHLKGFEAMGAKVQVGNGFVEAYVEGELKGAKIYLDFPSVGATENIMSAATLAKGTTILENAAKEPEIVDLANFLNAMGAKVRGAGTGTIRIEGVDKLYGANHSIIPDRIEAGTFMVAAAITGGDILIENAVPEHLRSITAKMEEMGVKIIEENEGVRVIGPDKLKAVDIKTMPHPGFPTDMQSQMMALLLQADGTSMITETVFENRFMHVEEFRRMNADIKIEGRSVIMNGPNSLQGAEVGATDLRAAAALILAGLVSEGYTRVTELKHLDRGYVDFHKKLAALGATIERVNEKVEEVKEQEVSDLHA.

Residue 22-23 (KN) coordinates phosphoenolpyruvate. Residue R93 coordinates UDP-N-acetyl-alpha-D-glucosamine. C117 acts as the Proton donor in catalysis. 2-(S-cysteinyl)pyruvic acid O-phosphothioketal is present on C117. Residues 122 to 126 (RPIDQ), D306, and V328 contribute to the UDP-N-acetyl-alpha-D-glucosamine site.

It belongs to the EPSP synthase family. MurA subfamily.

The protein resides in the cytoplasm. The enzyme catalyses phosphoenolpyruvate + UDP-N-acetyl-alpha-D-glucosamine = UDP-N-acetyl-3-O-(1-carboxyvinyl)-alpha-D-glucosamine + phosphate. It functions in the pathway cell wall biogenesis; peptidoglycan biosynthesis. Its function is as follows. Cell wall formation. Adds enolpyruvyl to UDP-N-acetylglucosamine. In Bacillus anthracis, this protein is UDP-N-acetylglucosamine 1-carboxyvinyltransferase 1.